We begin with the raw amino-acid sequence, 83 residues long: MSKGQSLQDPYLNALRKERIPVSIFLVNGIKLQGQIESFDQFVILLKNTVSQMVYKHAISTVVPARNVRIAAQGEGENEASNA.

The 60-residue stretch at 9 to 68 (DPYLNALRKERIPVSIFLVNGIKLQGQIESFDQFVILLKNTVSQMVYKHAISTVVPARNV) folds into the Sm domain.

Belongs to the Hfq family. As to quaternary structure, homohexamer.

Its function is as follows. RNA chaperone that binds small regulatory RNA (sRNAs) and mRNAs to facilitate mRNA translational regulation in response to envelope stress, environmental stress and changes in metabolite concentrations. Also binds with high specificity to tRNAs. The chain is RNA-binding protein Hfq from Hahella chejuensis (strain KCTC 2396).